Reading from the N-terminus, the 860-residue chain is Paladin (860 aa).

The disordered stretch occupies residues 1-24 (MGTTASAAPQATLHERLHSDSMTD). A lipid anchor (N-myristoyl glycine) is attached at Gly2. Residues 13 to 24 (LHERLHSDSMTD) are compositionally biased toward basic and acidic residues.

This sequence belongs to the paladin family.

The protein resides in the cytoplasm. The protein localises to the cytosol. In Danio rerio (Zebrafish), this protein is Paladin (pald1).